A 240-amino-acid polypeptide reads, in one-letter code: Spore coat polysaccharide biosynthesis protein SpsF (240 aa).

This sequence belongs to the CMP-NeuNAc synthase family.

It functions in the pathway spore coat biogenesis; spore coat polysaccharide biosynthesis. The chain is Spore coat polysaccharide biosynthesis protein SpsF (spsF) from Bacillus subtilis (strain 168).